A 212-amino-acid polypeptide reads, in one-letter code: MAAPPQLRALLQAVNKLLRQRRYHAALAVIKGFRNGAVYGVKIRAPHALVMTFLFRSGSLQEKLQAILKATYTHSRNLACFVFTYKSLQALQSHVQGGTHQMHSFLAAFIGGLLLFGENNNINSQINMYLTSRVLFALCRLGVEKGYIPALKWDPFPLHTAVIWGLVLWLFEYHRPTLQPSLQSSMTYLYEDSNVWHDLSDFLIFNKSRPSK.

Transmembrane regions (helical) follow at residues 97–117 (GGTH…LLFG) and 151–171 (LKWD…LWLF). N206 is a glycosylation site (N-linked (GlcNAc...) asparagine).

The protein belongs to the peroxisomal membrane protein PXMP2/4 family. Interacts with PEX19. Liver.

Its subcellular location is the peroxisome membrane. The polypeptide is Peroxisomal membrane protein 4 (Pxmp4) (Rattus norvegicus (Rat)).